Consider the following 131-residue polypeptide: Neo-calmodulin (131 aa).

EF-hand domains are found at residues 1 to 32, 33 to 68, 70 to 105, and 106 to 131; these read EFKE…LGQN, PTEA…KMKD, DSEE…LGEK, and LTDE…YEEF. The Ca(2+) site is built by Asp-10, Asp-12, Asp-14, Thr-16, Glu-21, Asp-46, Asp-48, Asn-50, Thr-52, Glu-57, Asp-83, Asp-85, Asn-87, Tyr-89, Glu-94, Asp-119, Asp-121, Asp-123, Gln-125, and Glu-130.

This sequence belongs to the calmodulin family.

This Gallus gallus (Chicken) protein is Neo-calmodulin.